A 1148-amino-acid polypeptide reads, in one-letter code: Envelopment polyprotein (1148 aa).

Positions 1-23 (MGELSPVCLYLLLQGLLLCNTGA) are cleaved as a signal peptide. Residues 24–495 (ARNLNELKME…VPGLHGWATM (472 aa)) lie on the Lumenal side of the membrane. 6 disulfides stabilise this stretch: cysteine 34-cysteine 159, cysteine 68-cysteine 165, cysteine 117-cysteine 136, cysteine 141-cysteine 146, cysteine 183-cysteine 193, and cysteine 218-cysteine 257. Asparagine 142 carries an N-linked (GlcNAc...) asparagine; by host glycan. A glycan (N-linked (GlcNAc...) asparagine; by host) is linked at asparagine 357. Cystine bridges form between cysteine 386/cysteine 445, cysteine 390/cysteine 399, cysteine 415/cysteine 434, and cysteine 462/cysteine 485. Asparagine 409 is a glycosylation site (N-linked (GlcNAc...) asparagine; by host). The chain crosses the membrane as a helical span at residues 496-516 (LLLLTLCFGWVLIPTITMILL). Residues 517-637 (KILIAFAYLC…LSLFRYRSRF (121 aa)) are Cytoplasmic-facing. The tract at residues 526-543 (CSKYNTDSKFRILIEKVK) is binding to the ribonucleoprotein. 2 consecutive CCHC-type zinc fingers follow at residues 555–575 (CEVCQYECETAKELESHRKSC) and 580–601 (CPYCLNPSEATTSALQAHFKVC). 3 binding to the ribonucleoprotein regions span residues 598-615 (FKVCKLTSRFQENLRKSL), 602-613 (KLTSRFQENLRK), and 621-635 (MQGCYRTLSLFRYRS). Residues 621 to 644 (MQGCYRTLSLFRYRSRFFVGLVWC) form the ITAM domain. Residues 625 to 628 (YRTL) carry the YxxL motif. The chain crosses the membrane as a helical span at residues 638-658 (FVGLVWCVLLVLELIVWAASA). At 659–1114 (ETQNLNAGWT…EWILGVLNGN (456 aa)) the chain is on the lumenal side. 8 disulfide bridges follow: cysteine 745/cysteine 780, cysteine 749/cysteine 787, cysteine 761/cysteine 894, cysteine 775/cysteine 905, cysteine 790/cysteine 913, cysteine 816/cysteine 825, cysteine 833/cysteine 842, and cysteine 873/cysteine 877. The interval 767 to 787 (YEYETGWGCNPPDCPGVGTGC) is fusion loop. An N-linked (GlcNAc...) asparagine; by host glycan is attached at asparagine 937. 5 cysteine pairs are disulfide-bonded: cysteine 979/cysteine 1009, cysteine 1002/cysteine 1054, cysteine 1019/cysteine 1024, cysteine 1055/cysteine 1060, and cysteine 1094/cysteine 1098. Residues 1115–1135 (WMVVAVLVVLLILSILLFTLC) form a helical membrane-spanning segment. 2 binding to the ribonucleoprotein regions span residues 1131 to 1143 (LFTLCCPRRPSYR) and 1131 to 1148 (LFTLCCPRRPSYRKEHKP). Residues 1136–1148 (CPRRPSYRKEHKP) lie on the Cytoplasmic side of the membrane.

Belongs to the hantavirus envelope glycoprotein family. As to quaternary structure, homodimer. Homotetramer; forms heterotetrameric Gn-Gc spikes in the pre-fusion conformation. Interacts (via C-terminus) with the nucleoprotein. Interacts with host TUFM; this interaction contributes to the virus-induced degradation of mitochondria by autophagy, which leads to degradation of host MAVS and inhibition of type I interferon (IFN) responses. Interacts with host MAP1LC3B; this interaction contributes to the virus-induced degradation of mitochondria by autophagy, which leads to degradation of host MAVS and inhibition of type I interferon (IFN) responses. In terms of assembly, homodimer. Homotetramer; forms heterotetrameric Gn-Gc spikes in the pre-fusion conformation. Homotrimer; forms homotrimer in the post-fusion conformation at acidic pH. Interacts (via C-terminus) with the nucleoprotein. Post-translationally, envelope polyprotein precursor is quickly cleaved in vivo just after synthesis, presumably by host signal peptidase.

The protein localises to the virion membrane. It is found in the host cell surface. The protein resides in the host Golgi apparatus membrane. Its subcellular location is the host endoplasmic reticulum membrane. It localises to the host mitochondrion. Forms homotetramers with glycoprotein C at the surface of the virion. Attaches the virion to host cell receptors including integrin ITGAV/ITGB3. This attachment induces virion internalization predominantly through clathrin-dependent endocytosis. Mediates the assembly and budding of infectious virus particles through its interaction with the nucleocapsid protein and the viral genome. May dysregulate normal immune and endothelial cell responses through an ITAM motif. Translocates to mitochondria, binds to host TUFM and recruits MAP1LC3B. These interactions induce mitochondrial autophagy and therefore destruction of host MAVS leading to inhibition of type I interferon (IFN) responses. Concomitant breakdown of glycoprotein N is apparently prevented by the nucleoprotein that may inhibit Gn-stimulated autophagosome-lysosome fusion. Interacts with the viral genomic RNA. In terms of biological role, forms homotetramers with glycoprotein N at the surface of the virion. Attaches the virion to host cell receptors including integrin ITGAV/ITGB3. This attachment induces virion internalization predominantly through clathrin-dependent endocytosis. Class II fusion protein that promotes fusion of viral membrane with host endosomal membrane after endocytosis of the virion. This chain is Envelopment polyprotein (GP), found in Puumala virus (strain K27).